The sequence spans 600 residues: Integrator complex subunit 11 (600 aa).

Zn(2+)-binding residues include His-68, His-70, Asp-72, His-73, His-157, and Asp-178. The HXHXDH motif signature appears at 68–73 (HFHLDH). Glu-203 is an active-site residue. His-414 contributes to the Zn(2+) binding site. Residues 469-479 (LLPDAKKPKLM) carry the Nuclear localization signal motif.

This sequence belongs to the metallo-beta-lactamase superfamily. RNA-metabolizing metallo-beta-lactamase-like family. INTS11 subfamily. Component of the Integrator complex, composed of core subunits INTS1, INTS2, INTS3, INTS4, INTS5, INTS6, INTS7, INTS8, INTS9/RC74, INTS10, INTS11/CPSF3L, INTS12, INTS13, INTS14 and INTS15. The core complex associates with protein phosphatase 2A subunits PPP2CA and PPP2R1A, to form the Integrator-PP2A (INTAC) complex. INTS11 is part of the RNA endonuclease subcomplex, composed of INTS4, INTS9, INTS11 and inositol hexakisphosphate (InsP6). The cofactor is Zn(2+).

The protein localises to the nucleus. The protein resides in the cytoplasm. Functionally, RNA endonuclease component of the integrator complex, a multiprotein complex that terminates RNA polymerase II (Pol II) transcription in the promoter-proximal region of genes. The integrator complex provides a quality checkpoint during transcription elongation by driving premature transcription termination of transcripts that are unfavorably configured for transcriptional elongation: the complex terminates transcription by (1) catalyzing dephosphorylation of the C-terminal domain (CTD) of Pol II subunit POLR2A/RPB1 and SUPT5H/SPT5, (2) degrading the exiting nascent RNA transcript via endonuclease activity and (3) promoting the release of Pol II from bound DNA. The integrator complex is also involved in terminating the synthesis of non-coding Pol II transcripts, such as enhancer RNAs (eRNAs), small nuclear RNAs (snRNAs), telomerase RNAs and long non-coding RNAs (lncRNAs). Within the integrator complex, INTS11 constitutes the RNA endonuclease subunit that degrades exiting nascent RNA transcripts. The protein is Integrator complex subunit 11 (INTS11) of Gallus gallus (Chicken).